The sequence spans 156 residues: MSRRNAAEKRPVLPDPQFNSRLATMMVSRLMQHGKKSTAQRILSDAFGLINERTGGDPLELFETAVKNATPLVEVRARRVGGATYQVPMEVRQERGTAMALRWLVSFSRARNGRSMAQKLAGELMDAANEAGSAVRKREETHKMAEANKAFAHYRY.

This sequence belongs to the universal ribosomal protein uS7 family. Part of the 30S ribosomal subunit. Contacts proteins S9 and S11.

One of the primary rRNA binding proteins, it binds directly to 16S rRNA where it nucleates assembly of the head domain of the 30S subunit. Is located at the subunit interface close to the decoding center, probably blocks exit of the E-site tRNA. This chain is Small ribosomal subunit protein uS7, found in Parasynechococcus marenigrum (strain WH8102).